The chain runs to 120 residues: Large ribosomal subunit protein bL20c (120 aa).

It belongs to the bacterial ribosomal protein bL20 family.

It is found in the plastid. Functionally, binds directly to 23S ribosomal RNA and is necessary for the in vitro assembly process of the 50S ribosomal subunit. It is not involved in the protein synthesizing functions of that subunit. This chain is Large ribosomal subunit protein bL20c (rpl20), found in Cuscuta gronovii (Common dodder).